The primary structure comprises 539 residues: Probable methionine--tRNA ligase, mitochondrial (539 aa).

A 'HIGH' region motif is present at residues 28-38 (FYVNAAPHLGH). Positions 326-330 (KMSKS) match the 'KMSKS' region motif. Lys329 serves as a coordination point for ATP.

Belongs to the class-I aminoacyl-tRNA synthetase family.

The protein localises to the mitochondrion matrix. The catalysed reaction is tRNA(Met) + L-methionine + ATP = L-methionyl-tRNA(Met) + AMP + diphosphate. This is Probable methionine--tRNA ligase, mitochondrial from Schizosaccharomyces pombe (strain 972 / ATCC 24843) (Fission yeast).